The primary structure comprises 476 residues: Glycogen synthase (476 aa).

Lys15 is a binding site for ADP-alpha-D-glucose.

The protein belongs to the glycosyltransferase 1 family. Bacterial/plant glycogen synthase subfamily.

The enzyme catalyses [(1-&gt;4)-alpha-D-glucosyl](n) + ADP-alpha-D-glucose = [(1-&gt;4)-alpha-D-glucosyl](n+1) + ADP + H(+). It participates in glycan biosynthesis; glycogen biosynthesis. Synthesizes alpha-1,4-glucan chains using ADP-glucose. The sequence is that of Glycogen synthase from Streptococcus equi subsp. equi (strain 4047).